An 857-amino-acid chain; its full sequence is Envelope glycoprotein B (857 aa).

An N-terminal signal peptide occupies residues 1–21 (MTRRRVLSVVVLLAALACRLG). The Virion surface portion of the chain corresponds to 22–732 (AQTPEQPAPP…SGFISFFKNP (711 aa)). 5 disulfides stabilise this stretch: cysteine 51-cysteine 528, cysteine 68-cysteine 484, cysteine 141-cysteine 206, cysteine 295-cysteine 342, and cysteine 551-cysteine 588. N-linked (GlcNAc...) asparagine; by host glycosylation is present at asparagine 76. Positions 108–114 (IYNGWYA) are involved in fusion and/or binding to host membrane. N-linked (GlcNAc...) asparagine; by host glycosylation occurs at asparagine 163. The segment at 192–200 (GWLIWTYRT) is involved in fusion and/or binding to host membrane. N-linked (GlcNAc...) asparagine; by host glycosylation is found at asparagine 290, asparagine 329, asparagine 348, and asparagine 395. The disordered stretch occupies residues 398 to 453 (ELTTPTSSPPSSPSPPAPSAARGSTPAAVLRRRRRDAGNATTPVPPTAPGKSLGTL). Residues 404–415 (SSPPSSPSPPAP) are compositionally biased toward pro residues. Residues 416–425 (SAARGSTPAA) are compositionally biased toward low complexity. Asparagine 436, asparagine 563, and asparagine 629 each carry an N-linked (GlcNAc...) asparagine; by host glycan. The segment at 561-620 (FINDTKTYEGQLGTDNEIFLTKKMTEVCQATSQYYFQSGNEIHVYNDYHHFKTIELDGIA) is oligomerization. 2 hydrophobic membrane proximal region regions span residues 678–730 (LDNA…SFFK) and 709–729 (NLVSTVGGLFSSLVSGFISFF). A helical transmembrane segment spans residues 733–753 (FGGMLILVLVAGVVILVISLT). Over 754-857 (RRTRQMSQQP…ALLGEAETEF (104 aa)) the chain is Intravirion. The interval 832-857 (FPGLRRRRYHDPETAAALLGEAETEF) is disordered. The segment covering 845–857 (TAAALLGEAETEF) has biased composition (low complexity).

The protein belongs to the herpesviridae glycoprotein B family. In terms of assembly, homotrimer; disulfide-linked. Binds to heparan sulfate proteoglycans. Interacts with gH/gL heterodimer. In terms of processing, a proteolytic cleavage by host furin generates two subunits that remain linked by disulfide bonds.

It localises to the virion membrane. Its subcellular location is the host cell membrane. The protein resides in the host endosome membrane. The protein localises to the host Golgi apparatus membrane. Its function is as follows. Envelope glycoprotein that forms spikes at the surface of virion envelope. Essential for the initial attachment to heparan sulfate moieties of the host cell surface proteoglycans. Involved in fusion of viral and cellular membranes leading to virus entry into the host cell. Following initial binding to its host receptors, membrane fusion is mediated by the fusion machinery composed at least of gB and the heterodimer gH/gL. May be involved in the fusion between the virion envelope and the outer nuclear membrane during virion egress. The sequence is that of Envelope glycoprotein B from Epstein-Barr virus (strain B95-8) (HHV-4).